The primary structure comprises 656 residues: Vacuolar amino acid transporter 3 (656 aa).

A disordered region spans residues 1–109; sequence MSNSQSIKIK…VPSTSEDPDV (109 aa). Positions 15 to 28 are enriched in polar residues; that stretch reads NENFASGSYSSRRS. Ser37 and Ser53 each carry phosphoserine. The segment covering 50-71 has biased composition (polar residues); it reads ISPSESNLPNNVAENTTDTPVN. The segment covering 75–97 has biased composition (basic and acidic residues); sequence IRDENHNSRKGKDVTLNSDEAHS. The residue at position 172 (Ser172) is a Phosphoserine. A run of 11 helical transmembrane segments spans residues 280-300, 307-327, 351-371, 389-409, 419-439, 457-477, 494-514, 537-557, 578-598, 601-621, and 636-656; these read AVLL…PKAF, FSSA…LLLI, FAIL…YISF, EYHL…LSLV, ALIA…WDVI, FSLF…ILPI, VMAA…AAFG, LYAI…IAII, YLRV…SSRL, FVSM…PPML, and DIFM…MTFF.

This sequence belongs to the amino acid/polyamine transporter 2 family.

The protein resides in the endoplasmic reticulum membrane. It is found in the vacuole membrane. Involved in amino acid efflux from the vacuole to the cytoplasm. Capable of transporting large neutral amino acids including tyrosine, glutamine, asparagine, isoleucine and leucine. Required for spore formation. This Schizosaccharomyces pombe (strain 972 / ATCC 24843) (Fission yeast) protein is Vacuolar amino acid transporter 3 (avt3).